Consider the following 651-residue polypeptide: Probable potassium transport system protein Kup (651 aa).

12 helical membrane-spanning segments follow: residues Leu41–Phe61, Val82–Val102, Leu130–Pro150, Ile163–Leu183, Val194–Leu214, Phe235–Thr255, Trp276–Leu296, Met309–Ala329, Ile366–Phe386, Ala395–Met415, Ala426–Ile446, and Glu450–Val470.

It belongs to the HAK/KUP transporter (TC 2.A.72) family.

It is found in the cell inner membrane. It catalyses the reaction K(+)(in) + H(+)(in) = K(+)(out) + H(+)(out). Transport of potassium into the cell. Likely operates as a K(+):H(+) symporter. The polypeptide is Probable potassium transport system protein Kup (Brucella canis (strain ATCC 23365 / NCTC 10854 / RM-666)).